The primary structure comprises 473 residues: Aspartyl aminopeptidase 1 (473 aa).

H93 serves as a coordination point for Zn(2+). H168 serves as a coordination point for substrate. 4 residues coordinate Zn(2+): D262, E298, E299, and D343. E298 lines the substrate pocket. Positions 343, 346, 371, and 378 each coordinate substrate. Residue H437 coordinates Zn(2+).

This sequence belongs to the peptidase M18 family. In terms of assembly, tetrahedron-shaped homododecamer built from six homodimers. Interacts with autophagy receptor Nbr1. Requires Zn(2+) as cofactor.

Its subcellular location is the cytoplasm. The protein localises to the vacuole lumen. The catalysed reaction is Release of an N-terminal aspartate or glutamate from a peptide, with a preference for aspartate.. Aspartyl aminopeptidase that is able to remove aspartyl residue at N-terminus of angiotensin I. Also acts as a chaperone and efficiently suppressed the thermal aggregation of citrate synthase. This Schizosaccharomyces pombe (strain 972 / ATCC 24843) (Fission yeast) protein is Aspartyl aminopeptidase 1 (ape4).